The chain runs to 301 residues: MNTVFNGKDFANKYYLMLKEFLKERNLRNKITLKVVLANDEPASKLYVSIKNRVAKEIGLNVEVIKLSANSVQSDILEVIDRENKNLSTDGIIVQLPLLKGMDLNSILNGIVSSKDVDGLSFVNLGKMILGDKKGFVPCTALAVLKILRDEGIKTSGKTVVVVGRSPLVGRPISILLSSKPHDATVIACHSKSIYLDVYLRQADIIISAVGKPKLIDKSMLCGKPYVIDIGISEIETDAGKILSGDTDFDNIKDCVKFITPVKGGIGPVTVLMLMFNTIKAHLINNNMFDVLDRLEKLVEV.

NADP(+) contacts are provided by residues 164 to 166 (GRS), Ser-191, and Ile-232.

It belongs to the tetrahydrofolate dehydrogenase/cyclohydrolase family. In terms of assembly, homodimer.

The catalysed reaction is (6R)-5,10-methylene-5,6,7,8-tetrahydrofolate + NADP(+) = (6R)-5,10-methenyltetrahydrofolate + NADPH. It carries out the reaction (6R)-5,10-methenyltetrahydrofolate + H2O = (6R)-10-formyltetrahydrofolate + H(+). It functions in the pathway one-carbon metabolism; tetrahydrofolate interconversion. Functionally, catalyzes the oxidation of 5,10-methylenetetrahydrofolate to 5,10-methenyltetrahydrofolate and then the hydrolysis of 5,10-methenyltetrahydrofolate to 10-formyltetrahydrofolate. This is Bifunctional protein FolD from Borreliella afzelii (strain PKo) (Borrelia afzelii).